We begin with the raw amino-acid sequence, 334 residues long: 3-keto-steroid reductase/17-beta-hydroxysteroid dehydrogenase 7 (334 aa).

The Extracellular segment spans residues 1–229; it reads MRKVVLITGA…VTCPGVVMTN (229 aa). 8–15 contacts NAD(+); the sequence is TGASSGIG. N37 carries N-linked (GlcNAc...) asparagine glycosylation. A substrate-binding site is contributed by S171. N178 carries an N-linked (GlcNAc...) asparagine glycan. Y193 acts as the Proton acceptor in catalysis. Residue N229 is glycosylated (N-linked (GlcNAc...) asparagine). The chain crosses the membrane as a helical span at residues 230–250; that stretch reads LTYGILPPFVWTLLLPVIWLL. Topologically, residues 251–334 are cytoplasmic; sequence RFFAHAFTVT…ITIQKSDHHS (84 aa).

It belongs to the short-chain dehydrogenases/reductases (SDR) family. ERG27 subfamily. In terms of assembly, binds to the short form of prolactin receptor. Post-translationally, phosphorylated. In terms of tissue distribution, most abundant in ovaries of pregnant animals.

The protein localises to the endoplasmic reticulum membrane. The enzyme catalyses 17beta-estradiol + NADP(+) = estrone + NADPH + H(+). It catalyses the reaction a 3beta-hydroxysteroid + NADP(+) = a 3-oxosteroid + NADPH + H(+). It carries out the reaction 4alpha-methyl-5alpha-cholest-7-en-3beta-ol + NADP(+) = 4alpha-methyl-5alpha-cholest-7-en-3-one + NADPH + H(+). The catalysed reaction is 4alpha-methyl-5alpha-cholest-8-en-3-one + NADPH + H(+) = 4alpha-methyl-5alpha-cholest-8-en-3beta-ol + NADP(+). The enzyme catalyses 3-dehydro-4alpha-methylzymosterol + NADPH + H(+) = 4alpha-methylzymosterol + NADP(+). It catalyses the reaction zymosterone + NADPH + H(+) = zymosterol + NADP(+). It carries out the reaction 5alpha-cholest-8-en-3-one + NADPH + H(+) = 5alpha-cholest-8-en-3beta-ol + NADP(+). The catalysed reaction is 5alpha-androstane-3beta,17beta-diol + NADP(+) = 17beta-hydroxy-5alpha-androstan-3-one + NADPH + H(+). The enzyme catalyses 5alpha-androstane-3alpha,17beta-diol + NADP(+) = 17beta-hydroxy-5alpha-androstan-3-one + NADPH + H(+). It participates in steroid biosynthesis; estrogen biosynthesis. Its pathway is steroid biosynthesis; zymosterol biosynthesis; zymosterol from lanosterol: step 5/6. Functionally, bifunctional enzyme involved in steroid-hormone metabolism and cholesterol biosynthesis. Catalyzes the NADP(H)-dependent reduction of estrogens and androgens and regulates the biological potency of these steroids. Converts estrone (E1) to a more potent estrogen, 17beta-estradiol (E2). Converts dihydrotestosterone (DHT) to an inactive form. Also participates in the post-squalene cholesterol biosynthesis, as a 3-ketosteroid reductase. The chain is 3-keto-steroid reductase/17-beta-hydroxysteroid dehydrogenase 7 (Hsd17b7) from Rattus norvegicus (Rat).